Consider the following 1438-residue polypeptide: Pyochelin synthetase PchE (1438 aa).

A Carrier 1 domain is found at 6–85 (DSRTALRDWL…AWLDLLACAD (80 aa)). Ser-46 is subject to O-(pantetheine 4'-phosphoryl)serine. The tract at residues 136-442 (RTRDVDPQRL…ARRQGQPRSA (307 aa)) is condensation/cyclization. Residues 563-950 (RAAEAPDADA…GRVDQQVKVR (388 aa)) are adenylation. Residues 1350-1425 (EPLEAHEQAL…GLARHLQVQT (76 aa)) enclose the Carrier 2 domain. O-(pantetheine 4'-phosphoryl)serine is present on Ser-1385.

This sequence belongs to the NRP synthetase family. It depends on pantetheine 4'-phosphate as a cofactor.

The catalysed reaction is holo-[peptidyl-carrier protein] + L-cysteine + ATP = L-cysteinyl-[peptidyl-carrier protein] + AMP + diphosphate. It functions in the pathway siderophore biosynthesis. The protein operates within antifungal biosynthesis. Functionally, involved in the biosynthesis of the siderophore pyochelin. Accepts salicylate activated by PchD at the first peptidyl carrier domain (ArCP), and activates and fixes one molecule of cysteine at the second peptidyl carrier domain (PCP1) via a thioester linkage to the phosphopanthetheine moiety. Then catalyzes the condensation reaction between the salicylate bound to the first site and the cysteine bound to the second site, and the cyclization of the cysteine to form the salicyl-thiazolinyl-S-PCP1 intermediate at the second site. When this intermediate is released by the action of a thioesterase, it produces the antifungal antibiotic dihydroaeruginoic acid (Dha or hydroxyphenyl-thiazolinyl-carboxylate). In Pseudomonas aeruginosa (strain ATCC 15692 / DSM 22644 / CIP 104116 / JCM 14847 / LMG 12228 / 1C / PRS 101 / PAO1), this protein is Pyochelin synthetase PchE.